Reading from the N-terminus, the 180-residue chain is Oligoribonuclease (180 aa).

The Exonuclease domain maps to 7 to 170; the sequence is LIWIDLEMTG…DDIRESLAEL (164 aa). Y128 is a catalytic residue.

It belongs to the oligoribonuclease family.

Its subcellular location is the cytoplasm. 3'-to-5' exoribonuclease specific for small oligoribonucleotides. This Pectobacterium atrosepticum (strain SCRI 1043 / ATCC BAA-672) (Erwinia carotovora subsp. atroseptica) protein is Oligoribonuclease.